The chain runs to 78 residues: MNRIIFCTFLQKKSEGQDYPPYPGKLGEKIYNQISKIAWKEWKLQQTKLINEEKLNMFNQNDRKKIEKYMKLFLFNNE.

This sequence belongs to the Fe(2+)-trafficking protein family. Monomer.

In terms of biological role, could be a mediator in iron transactions between iron acquisition and iron-requiring processes, such as synthesis and/or repair of Fe-S clusters in biosynthetic enzymes. The chain is Probable Fe(2+)-trafficking protein from Buchnera aphidicola subsp. Schizaphis graminum (strain Sg).